A 356-amino-acid polypeptide reads, in one-letter code: Peptide chain release factor 1 (356 aa).

Residue Gln235 is modified to N5-methylglutamine.

This sequence belongs to the prokaryotic/mitochondrial release factor family. In terms of processing, methylated by PrmC. Methylation increases the termination efficiency of RF1.

Its subcellular location is the cytoplasm. Peptide chain release factor 1 directs the termination of translation in response to the peptide chain termination codons UAG and UAA. This Hydrogenobaculum sp. (strain Y04AAS1) protein is Peptide chain release factor 1.